Reading from the N-terminus, the 507-residue chain is tRNA (guanine(6)-N(2))-methyltransferase THUMP3 (507 aa).

In terms of domain architecture, THUMP spans 165–285; that stretch reads KIDQRNVKKE…DNEVIVGIAL (121 aa).

The protein belongs to the methyltransferase superfamily. Part of the heterodimeric THUMPD3-TRM112 methyltransferase complex; this complex forms an active tRNA methyltransferase, where TRMT112 acts as an activator of the catalytic subunit THUMPD3.

The protein localises to the cytoplasm. The catalysed reaction is guanosine(6) in tRNA + S-adenosyl-L-methionine = N(2)-methylguanosine(6) in tRNA + S-adenosyl-L-homocysteine + H(+). The enzyme catalyses guanosine(7) in tRNA + S-adenosyl-L-methionine = N(2)-methylguanosine(7) in tRNA + S-adenosyl-L-homocysteine + H(+). In terms of biological role, catalytic subunit of the THUMPD3-TRM112 methyltransferase complex, that specifically mediates the S-adenosyl-L-methionine-dependent N(2)-methylation of guanosine nucleotide at position 6 (m2G6) in tRNAs. This is one of the major tRNA (guanine-N(2))-methyltransferases. Also catalyzes the S-adenosyl-L-methionine-dependent N(2)-methylation of guanosine nucleotide at position 7 of tRNA(Trp). This Homo sapiens (Human) protein is tRNA (guanine(6)-N(2))-methyltransferase THUMP3.